The following is a 384-amino-acid chain: Glucans biosynthesis protein C (384 aa).

Transmembrane regions (helical) follow at residues 17–37, 54–74, 91–111, 140–160, 173–193, 212–232, 240–260, 274–294, 311–331, and 338–358; these read AWLMLLGIPFHISLIYSTHSW, FIHAFRMQVFFVISGYFSYML, VGIPMLTAIPLLTLPQFILLQ, LWFLLVLVILTTVSIGIFTWF, AISLAKLSLIFFLLGVAYAAI, FIVMQTLFYVPFFILGALAFI, FTTPSRGCTLGAAVAFIAYLL, TESVITMVMGLWMVNVVFSLG, ASLFIYLVHHPLTLFFGAYIT, and LIGFLCGLIFVMGIALILYEI.

The protein belongs to the acyltransferase 3 family. OpgC subfamily.

The protein resides in the cell membrane. The protein operates within glycan metabolism; osmoregulated periplasmic glucan (OPG) biosynthesis. Necessary for the succinyl substitution of periplasmic glucans. Could catalyze the transfer of succinyl residues from the cytoplasmic side of the membrane to the nascent glucan backbones on the periplasmic side of the membrane. This is Glucans biosynthesis protein C from Salmonella typhi.